Reading from the N-terminus, the 440-residue chain is 23S rRNA (uracil(1939)-C(5))-methyltransferase RlmD (440 aa).

The 59-residue stretch at 11–69 folds into the TRAM domain; it reads STLDTKHQPVTIERLDHQGSGLAFLHKKPLFVDGALPGEEVLIQLTENKSKYARGQLIK. [4Fe-4S] cluster contacts are provided by C82, C88, C91, and C169. Residues Q272, F301, N306, E322, N349, and D370 each coordinate S-adenosyl-L-methionine. C396 serves as the catalytic Nucleophile.

The protein belongs to the class I-like SAM-binding methyltransferase superfamily. RNA M5U methyltransferase family. RlmD subfamily.

The catalysed reaction is uridine(1939) in 23S rRNA + S-adenosyl-L-methionine = 5-methyluridine(1939) in 23S rRNA + S-adenosyl-L-homocysteine + H(+). Its function is as follows. Catalyzes the formation of 5-methyl-uridine at position 1939 (m5U1939) in 23S rRNA. This chain is 23S rRNA (uracil(1939)-C(5))-methyltransferase RlmD, found in Vibrio cholerae serotype O1 (strain M66-2).